We begin with the raw amino-acid sequence, 293 residues long: HTH-type transcriptional regulator HdfR (293 aa).

One can recognise an HTH lysR-type domain in the interval 1-58 (MDTELLKTFLEVSRTRHFGRAAESLYLTQSAVSFRIRQLENQLGANLFTRHRNNIRLT). The H-T-H motif DNA-binding region spans 18-37 (FGRAAESLYLTQSAVSFRIR).

Belongs to the LysR transcriptional regulatory family.

Functionally, negatively regulates the transcription of the flagellar master operon flhDC by binding to the upstream region of the operon. This chain is HTH-type transcriptional regulator HdfR, found in Yersinia pseudotuberculosis serotype O:1b (strain IP 31758).